A 244-amino-acid polypeptide reads, in one-letter code: 3-deoxy-manno-octulosonate cytidylyltransferase (244 aa).

It belongs to the KdsB family.

The protein resides in the cytoplasm. The catalysed reaction is 3-deoxy-alpha-D-manno-oct-2-ulosonate + CTP = CMP-3-deoxy-beta-D-manno-octulosonate + diphosphate. It participates in nucleotide-sugar biosynthesis; CMP-3-deoxy-D-manno-octulosonate biosynthesis; CMP-3-deoxy-D-manno-octulosonate from 3-deoxy-D-manno-octulosonate and CTP: step 1/1. Its pathway is bacterial outer membrane biogenesis; lipopolysaccharide biosynthesis. Functionally, activates KDO (a required 8-carbon sugar) for incorporation into bacterial lipopolysaccharide in Gram-negative bacteria. The polypeptide is 3-deoxy-manno-octulosonate cytidylyltransferase (Flavobacterium johnsoniae (strain ATCC 17061 / DSM 2064 / JCM 8514 / BCRC 14874 / CCUG 350202 / NBRC 14942 / NCIMB 11054 / UW101) (Cytophaga johnsonae)).